The following is a 172-amino-acid chain: Bifunctional protein PyrR (172 aa).

The PRPP-binding signature appears at 90–102 (LVLVDDVLMSGRT).

It belongs to the purine/pyrimidine phosphoribosyltransferase family. PyrR subfamily.

The catalysed reaction is UMP + diphosphate = 5-phospho-alpha-D-ribose 1-diphosphate + uracil. Functionally, regulates the transcription of the pyrimidine nucleotide (pyr) operon in response to exogenous pyrimidines. In terms of biological role, also displays a weak uracil phosphoribosyltransferase activity which is not physiologically significant. This is Bifunctional protein PyrR from Pseudomonas entomophila (strain L48).